Consider the following 1362-residue polypeptide: MGQGVLRGEGHPNNNPNSKVGWKSLVGIITIFMLILCDQSDGKICYSMDIRNNISQFSMLEDCTVIEGHLQILLMFTSKPENFRGLRFPKLTTITDYLLLFRVYGLESLKDLFPNLTVIRGTRLFFNYALVIFEMVHXKEIGLYNLMNITRGSVRIEKNNELCYLSTIDWSIILDSVEDNYIELNRDNKEECGDVCPGTVKGKSKCKHTLVNGALVERCWTQDHCQKVCPSDCKGSGCLPDGQCCHPECLGSCRKPNDPSECTACRHFQNEGVCVTACPKGSYQFQGWRCIDFNTCQELNSRCQNSRDNSCPPYVIHKGECMPDCPSGYIANSTTRTCTPCAGPCPKVCTIFQNVKTIDSVTSAQELRGCTVINGSLIINLRGGNNIATELEANLGLIEEISGYLKIRRSYALVSLSFFRKLRLIRGEVLEAGNYSFYALDNPSLRQLWDWHKHNLTIIHGKLFFHHNPRLCLSQIHQMEEVTGTKGRQDKNDIATKTNGDQASCEDNLLTFNFIKTSHDMVLLRWDAYWPPDYRDLLGFMVHYKEAPFQNVTEFDGQDACGSNSWTVVDMDAPERSADGKTQSPGCLLRSLKPWTQYAVFVKTLVSGSDEGRTYGAKSKIIYIRTNETIPSVPLDPFSVSNSTSQIILKWKPPSEPNGNVTHYLVYWQEQPEDSDLYEVDYCNKGLKLPSRTWTPPTEIDENGNENQTEHTSVNKCCPCPKTEFQIQKEQDESAFRKTFENYLHNEVFIPRPVRKRRDLFGVANGTLPDPVTAPPLFNVSSTRAPDEPEPKIYSQKVWFKESVLISGLKHFTGYRIEIHACNHELSMGCSVAAYVNARTMPEATADKVVGPITYEYVEPNIIHLKWQEPKDPNGLIVLYEVHYSRVGGIEEVITCVSQKQYNTDKGGKLRVLTPGNYSVKIRATSLAGNGSWTEQAYFQVPDHPHSNIVKIITGPIIAVFLLLIVLVYCVVQKKKDAEGPAGPLYTSSNPEYLSASEVYIPDEWEVPRDKINLLRELGQGSFGMVYEGIAKDIIKGEPEVRVAVKTVNESASLRERIEFLNEASVMKAFNCHHVVRLLGVVSKGQPTLVIMELMAHGDLKSYLRSLRPDAENNPGRLAPTLKEIIQMAAEISDGMAYLNAKKFVHRDLAARNCMVADDYAVKIGDFGMTRDIYETDYYRKGGKGLLPVRWMSPESLKDGVFTAFSDVWSFGVVLWEITSLAEQPYQGLSNEQVLKFVMDGGSLDHPENCPPRLHSLMQMCWQYNPKMRPTFLEIIDMLKDDLRPSFQDVSFYYSDENKPPETDDLEIDFENMESTPLDPSSCSLRDQSSRTNIYEEHIPYTHMNGGRKNGRILSLPRSSPS.

Positions 1–37 (MGQGVLRGEGHPNNNPNSKVGWKSLVGIITIFMLILC) are cleaved as a signal peptide. Residues 38–184 (DQSDGKICYS…DSVEDNYIEL (147 aa)) form a leucine-rich region region. Residues cysteine 45 and cysteine 63 are joined by a disulfide bond. Asparagine 53, asparagine 115, and asparagine 148 each carry an N-linked (GlcNAc...) asparagine glycan. 14 cysteine pairs are disulfide-bonded: cysteine 163-cysteine 192, cysteine 196-cysteine 219, cysteine 206-cysteine 225, cysteine 229-cysteine 238, cysteine 233-cysteine 244, cysteine 245-cysteine 253, cysteine 249-cysteine 262, cysteine 265-cysteine 274, cysteine 278-cysteine 290, cysteine 296-cysteine 321, cysteine 303-cysteine 311, cysteine 325-cysteine 338, cysteine 341-cysteine 345, and cysteine 349-cysteine 370. The N-linked (GlcNAc...) asparagine glycan is linked to asparagine 332. N-linked (GlcNAc...) asparagine glycosylation is found at asparagine 374, asparagine 434, and asparagine 455. Cysteine 472 and cysteine 505 are joined by a disulfide. 2 Fibronectin type-III domains span residues 508-629 (NLLT…TNET) and 633-730 (VPLD…IQKE). Asparagine 551, asparagine 627, asparagine 642, asparagine 660, and asparagine 707 each carry an N-linked (GlcNAc...) asparagine glycan. Cystine bridges form between cysteine 683–cysteine 896 and cysteine 822–cysteine 830. A disordered region spans residues 694–714 (WTPPTEIDENGNENQTEHTSV). Residues 705–714 (NENQTEHTSV) are compositionally biased toward polar residues. The insulin-binding stretch occupies residues 741–749 (ENYLHNEVF). Topologically, residues 759–951 (DLFGVANGTL…PDHPHSNIVK (193 aa)) are extracellular. Residues asparagine 765 and asparagine 779 are each glycosylated (N-linked (GlcNAc...) asparagine). Residues 849-944 (VVGPITYEYV…EQAYFQVPDH (96 aa)) enclose the Fibronectin type-III 3 domain. Residues asparagine 917 and asparagine 930 are each glycosylated (N-linked (GlcNAc...) asparagine). A helical transmembrane segment spans residues 952 to 972 (IITGPIIAVFLLLIVLVYCVV). Topologically, residues 973 to 1362 (QKKKDAEGPA…ILSLPRSSPS (390 aa)) are cytoplasmic. Tyrosine 993 bears the Phosphotyrosine; by autocatalysis mark. The region spanning 1012–1287 (INLLRELGQG…MLKDDLRPSF (276 aa)) is the Protein kinase domain. ATP contacts are provided by residues serine 1022, lysine 1046, and 1093–1099 (ELMAHGD). The active-site Proton donor/acceptor is the aspartate 1148. ATP contacts are provided by residues 1152–1153 (RN) and aspartate 1166. Tyrosine 1174, tyrosine 1178, tyrosine 1179, tyrosine 1335, and tyrosine 1341 each carry phosphotyrosine; by autocatalysis.

Belongs to the protein kinase superfamily. Tyr protein kinase family. Insulin receptor subfamily. Tetramer of 2 alpha and 2 beta chains linked by disulfide bonds. The alpha chains contribute to the formation of the ligand-binding domain, while the beta chains carry the kinase domain. Autophosphorylated on tyrosine residues in response to insulin. As to expression, localized mainly to the envelope in oocytes. Localized to the animal hemisphere during early embryonic cleavage. Expressed during organogenesis in regions of ecto- and mesodermic origins. Expressed in the entire encephalon, the otic and optic vesicles, the gills, the somites and the pronephric tubules of the embryo. Also found in adult liver, muscle and regenerated forelimbs.

The protein localises to the cell membrane. The enzyme catalyses L-tyrosyl-[protein] + ATP = O-phospho-L-tyrosyl-[protein] + ADP + H(+). Its activity is regulated as follows. Autophosphorylation activates the kinase activity. In terms of biological role, receptor tyrosine kinase which mediates actions of insulin. May be required for forelimb regeneration. The polypeptide is Insulin receptor (insr) (Xenopus laevis (African clawed frog)).